Consider the following 599-residue polypeptide: Elongation factor 4 (599 aa).

Residues 2 to 184 (KNIRNFSIIA…RLVRDIPPPQ (183 aa)) form the tr-type G domain. Residues 14-19 (DHGKST) and 131-134 (NKID) each bind GTP.

Belongs to the TRAFAC class translation factor GTPase superfamily. Classic translation factor GTPase family. LepA subfamily.

The protein resides in the cell inner membrane. It carries out the reaction GTP + H2O = GDP + phosphate + H(+). Required for accurate and efficient protein synthesis under certain stress conditions. May act as a fidelity factor of the translation reaction, by catalyzing a one-codon backward translocation of tRNAs on improperly translocated ribosomes. Back-translocation proceeds from a post-translocation (POST) complex to a pre-translocation (PRE) complex, thus giving elongation factor G a second chance to translocate the tRNAs correctly. Binds to ribosomes in a GTP-dependent manner. In Salmonella gallinarum (strain 287/91 / NCTC 13346), this protein is Elongation factor 4.